Reading from the N-terminus, the 183-residue chain is Ribosome-recycling factor (183 aa).

The protein belongs to the RRF family.

The protein localises to the cytoplasm. Responsible for the release of ribosomes from messenger RNA at the termination of protein biosynthesis. May increase the efficiency of translation by recycling ribosomes from one round of translation to another. This chain is Ribosome-recycling factor, found in Bifidobacterium longum (strain DJO10A).